A 197-amino-acid polypeptide reads, in one-letter code: Beta-crystallin A2 (197 aa).

Residues 1–11 are N-terminal arm; it reads MSSAPAPGPAP. Beta/gamma crystallin 'Greek key' domains lie at 12-52 and 53-99; these read ASLT…KVEN and GVWV…RPVL. A connecting peptide region spans residues 100–105; that stretch reads CANHND. 2 Beta/gamma crystallin 'Greek key' domains span residues 106 to 147 and 148 to 196; these read SRVT…KVSS and GAWV…RRVQ.

The protein belongs to the beta/gamma-crystallin family. Homo/heterodimer, or complexes of higher-order. The structure of beta-crystallin oligomers seems to be stabilized through interactions between the N-terminal arms.

In terms of biological role, crystallins are the dominant structural components of the vertebrate eye lens. The polypeptide is Beta-crystallin A2 (CRYBA2) (Homo sapiens (Human)).